The following is a 289-amino-acid chain: Formamidopyrimidine-DNA glycosylase (289 aa).

P2 (schiff-base intermediate with DNA) is an active-site residue. E3 (proton donor) is an active-site residue. K61 serves as the catalytic Proton donor; for beta-elimination activity. DNA is bound by residues H96, R115, and K161. Residues 247–281 (SAYGQENLPCPRCGAPIKREKFMNRSSFSCPRCQP) form an FPG-type zinc finger. R271 (proton donor; for delta-elimination activity) is an active-site residue.

This sequence belongs to the FPG family. In terms of assembly, monomer. Zn(2+) serves as cofactor.

It carries out the reaction Hydrolysis of DNA containing ring-opened 7-methylguanine residues, releasing 2,6-diamino-4-hydroxy-5-(N-methyl)formamidopyrimidine.. The enzyme catalyses 2'-deoxyribonucleotide-(2'-deoxyribose 5'-phosphate)-2'-deoxyribonucleotide-DNA = a 3'-end 2'-deoxyribonucleotide-(2,3-dehydro-2,3-deoxyribose 5'-phosphate)-DNA + a 5'-end 5'-phospho-2'-deoxyribonucleoside-DNA + H(+). Involved in base excision repair of DNA damaged by oxidation or by mutagenic agents. Acts as a DNA glycosylase that recognizes and removes damaged bases. Has a preference for oxidized purines, such as 7,8-dihydro-8-oxoguanine (8-oxoG). Has AP (apurinic/apyrimidinic) lyase activity and introduces nicks in the DNA strand. Cleaves the DNA backbone by beta-delta elimination to generate a single-strand break at the site of the removed base with both 3'- and 5'-phosphates. This chain is Formamidopyrimidine-DNA glycosylase, found in Rhodococcus erythropolis (strain PR4 / NBRC 100887).